We begin with the raw amino-acid sequence, 371 residues long: Glutamate 5-kinase (371 aa).

Residue lysine 10 coordinates ATP. Residues serine 50, aspartate 137, and asparagine 149 each contribute to the substrate site. ATP-binding positions include 169–170 (SD) and 208–214 (TGGMYTK). Residues 274–352 (QGKVYIDDGA…EEIKNILGED (79 aa)) enclose the PUA domain.

It belongs to the glutamate 5-kinase family.

It is found in the cytoplasm. The catalysed reaction is L-glutamate + ATP = L-glutamyl 5-phosphate + ADP. It functions in the pathway amino-acid biosynthesis; L-proline biosynthesis; L-glutamate 5-semialdehyde from L-glutamate: step 1/2. In terms of biological role, catalyzes the transfer of a phosphate group to glutamate to form L-glutamate 5-phosphate. The chain is Glutamate 5-kinase from Dictyoglomus thermophilum (strain ATCC 35947 / DSM 3960 / H-6-12).